The following is a 204-amino-acid chain: Thiamine-phosphate synthase (204 aa).

Residues 28–32 (QLRIK) and N60 each bind 4-amino-2-methyl-5-(diphosphooxymethyl)pyrimidine. 2 residues coordinate Mg(2+): D61 and D80. The 4-amino-2-methyl-5-(diphosphooxymethyl)pyrimidine site is built by S99 and K128. Residues G157 and 177-178 (VT) contribute to the 2-[(2R,5Z)-2-carboxy-4-methylthiazol-5(2H)-ylidene]ethyl phosphate site.

Belongs to the thiamine-phosphate synthase family. Requires Mg(2+) as cofactor.

It carries out the reaction 2-[(2R,5Z)-2-carboxy-4-methylthiazol-5(2H)-ylidene]ethyl phosphate + 4-amino-2-methyl-5-(diphosphooxymethyl)pyrimidine + 2 H(+) = thiamine phosphate + CO2 + diphosphate. The catalysed reaction is 2-(2-carboxy-4-methylthiazol-5-yl)ethyl phosphate + 4-amino-2-methyl-5-(diphosphooxymethyl)pyrimidine + 2 H(+) = thiamine phosphate + CO2 + diphosphate. The enzyme catalyses 4-methyl-5-(2-phosphooxyethyl)-thiazole + 4-amino-2-methyl-5-(diphosphooxymethyl)pyrimidine + H(+) = thiamine phosphate + diphosphate. It participates in cofactor biosynthesis; thiamine diphosphate biosynthesis; thiamine phosphate from 4-amino-2-methyl-5-diphosphomethylpyrimidine and 4-methyl-5-(2-phosphoethyl)-thiazole: step 1/1. Its function is as follows. Condenses 4-methyl-5-(beta-hydroxyethyl)thiazole monophosphate (THZ-P) and 2-methyl-4-amino-5-hydroxymethyl pyrimidine pyrophosphate (HMP-PP) to form thiamine monophosphate (TMP). The chain is Thiamine-phosphate synthase from Rhizobium etli (strain ATCC 51251 / DSM 11541 / JCM 21823 / NBRC 15573 / CFN 42).